An 89-amino-acid polypeptide reads, in one-letter code: Small ribosomal subunit protein uS15 (89 aa).

Belongs to the universal ribosomal protein uS15 family. In terms of assembly, part of the 30S ribosomal subunit. Forms a bridge to the 50S subunit in the 70S ribosome, contacting the 23S rRNA.

One of the primary rRNA binding proteins, it binds directly to 16S rRNA where it helps nucleate assembly of the platform of the 30S subunit by binding and bridging several RNA helices of the 16S rRNA. Functionally, forms an intersubunit bridge (bridge B4) with the 23S rRNA of the 50S subunit in the ribosome. The sequence is that of Small ribosomal subunit protein uS15 from Bacillus pumilus (strain SAFR-032).